A 182-amino-acid polypeptide reads, in one-letter code: Protein LURP-one-related 7 (182 aa).

This sequence belongs to the LOR family.

Functionally, might be related to the phospholipid scramblase and tubby-like superfamily of membrane tethered transcription factors. This chain is Protein LURP-one-related 7, found in Arabidopsis thaliana (Mouse-ear cress).